The primary structure comprises 514 residues: 2-isopropylmalate synthase (514 aa).

The region spanning 5–268 (LIIFDTTLRD…DVGIDTSQIV (264 aa)) is the Pyruvate carboxyltransferase domain. Mn(2+)-binding residues include D14, H202, H204, and N239. Positions 395 to 514 (KFVSLSQHSE…KDDKVNPQRS (120 aa)) are regulatory domain.

Belongs to the alpha-IPM synthase/homocitrate synthase family. LeuA type 1 subfamily. In terms of assembly, homodimer. Requires Mn(2+) as cofactor.

The protein localises to the cytoplasm. It carries out the reaction 3-methyl-2-oxobutanoate + acetyl-CoA + H2O = (2S)-2-isopropylmalate + CoA + H(+). The protein operates within amino-acid biosynthesis; L-leucine biosynthesis; L-leucine from 3-methyl-2-oxobutanoate: step 1/4. Catalyzes the condensation of the acetyl group of acetyl-CoA with 3-methyl-2-oxobutanoate (2-ketoisovalerate) to form 3-carboxy-3-hydroxy-4-methylpentanoate (2-isopropylmalate). The sequence is that of 2-isopropylmalate synthase from Burkholderia lata (strain ATCC 17760 / DSM 23089 / LMG 22485 / NCIMB 9086 / R18194 / 383).